The chain runs to 145 residues: Transcriptional regulator MraZ (145 aa).

SpoVT-AbrB domains are found at residues 5 to 49 (TYNH…LESE) and 78 to 121 (TYKV…AKEV).

Belongs to the MraZ family. In terms of assembly, forms oligomers.

It is found in the cytoplasm. Its subcellular location is the nucleoid. The chain is Transcriptional regulator MraZ from Ureaplasma urealyticum serovar 10 (strain ATCC 33699 / Western).